The sequence spans 932 residues: Protein translocase subunit SecA (932 aa).

Residues glutamine 87, glycine 105 to threonine 109, and aspartate 515 contribute to the ATP site. Zn(2+)-binding residues include cysteine 916, cysteine 918, cysteine 927, and histidine 928.

It belongs to the SecA family. In terms of assembly, monomer and homodimer. Part of the essential Sec protein translocation apparatus which comprises SecA, SecYEG and auxiliary proteins SecDF-YajC and YidC. The cofactor is Zn(2+).

It is found in the cell inner membrane. Its subcellular location is the cytoplasm. The catalysed reaction is ATP + H2O + cellular proteinSide 1 = ADP + phosphate + cellular proteinSide 2.. Part of the Sec protein translocase complex. Interacts with the SecYEG preprotein conducting channel. Has a central role in coupling the hydrolysis of ATP to the transfer of proteins into and across the cell membrane, serving both as a receptor for the preprotein-SecB complex and as an ATP-driven molecular motor driving the stepwise translocation of polypeptide chains across the membrane. This chain is Protein translocase subunit SecA, found in Burkholderia orbicola (strain MC0-3).